A 246-amino-acid polypeptide reads, in one-letter code: Adenosylcobinamide-GDP ribazoletransferase (246 aa).

The next 6 helical transmembrane spans lie at 37–57, 64–84, 100–122, 139–159, 185–205, and 223–243; these read FPAVGLVIGAAVAGAAWAGAL, ALAALIVWVGVTGALHLDGLA, LLAVLADPHVGSFGVVAIVLQLL, ALVLVPFAARIGPLVWTWWLM, LAAAAWFTPALLVTPLLVLWW, and AGIELIETGLLLSVAITGLWI.

This sequence belongs to the CobS family. It depends on Mg(2+) as a cofactor.

It is found in the cell inner membrane. The catalysed reaction is alpha-ribazole + adenosylcob(III)inamide-GDP = adenosylcob(III)alamin + GMP + H(+). The enzyme catalyses alpha-ribazole 5'-phosphate + adenosylcob(III)inamide-GDP = adenosylcob(III)alamin 5'-phosphate + GMP + H(+). It participates in cofactor biosynthesis; adenosylcobalamin biosynthesis; adenosylcobalamin from cob(II)yrinate a,c-diamide: step 7/7. In terms of biological role, joins adenosylcobinamide-GDP and alpha-ribazole to generate adenosylcobalamin (Ado-cobalamin). Also synthesizes adenosylcobalamin 5'-phosphate from adenosylcobinamide-GDP and alpha-ribazole 5'-phosphate. The polypeptide is Adenosylcobinamide-GDP ribazoletransferase (Novosphingobium aromaticivorans (strain ATCC 700278 / DSM 12444 / CCUG 56034 / CIP 105152 / NBRC 16084 / F199)).